Here is a 148-residue protein sequence, read N- to C-terminus: Endoribonuclease YbeY (148 aa).

3 residues coordinate Zn(2+): H113, H117, and H123.

Belongs to the endoribonuclease YbeY family. Zn(2+) is required as a cofactor.

Its subcellular location is the cytoplasm. Its function is as follows. Single strand-specific metallo-endoribonuclease involved in late-stage 70S ribosome quality control and in maturation of the 3' terminus of the 16S rRNA. The chain is Endoribonuclease YbeY from Borrelia recurrentis (strain A1).